The sequence spans 366 residues: MGNTFGRLFRVSTFGESHGGGVGVVIDGCPPRLEISQEEIQIDLDRRKPGQSRIVTPRRENDICEIISGVFDGKTLGTPIAILVRNQDARSQDYNEMAEKFRPSHADATYEAKYGIRNWKGGGRSSARETIGRVAAGAIAKKILKSVYNVEIIGYVKRIKDLEAIIDPNTVTLDEVESNIVRCPNGETAAKMIALIDQIRLDKDSIGGVVECVARNVPKGLGEPVFDKLEADLAKGMMSLPASKGFEIGSGFAGTFLTGSEHNDEYFIDNNGEIRTTSNRSGGIQGGISNGENIIIRTAFKPTATIGKEQKTVTRSGEETTLAAKGRHDPCVLPRAVPMVEAMMALVLCDHLLRFQGQCTISDRFF.

Residues Arg-47 and Arg-53 each contribute to the NADP(+) site. Residues 124–126 (RSS), Gly-286, 301–305 (KPTAT), and Arg-327 contribute to the FMN site.

It belongs to the chorismate synthase family. In terms of assembly, homotetramer. It depends on FMNH2 as a cofactor.

The catalysed reaction is 5-O-(1-carboxyvinyl)-3-phosphoshikimate = chorismate + phosphate. It participates in metabolic intermediate biosynthesis; chorismate biosynthesis; chorismate from D-erythrose 4-phosphate and phosphoenolpyruvate: step 7/7. Its function is as follows. Catalyzes the anti-1,4-elimination of the C-3 phosphate and the C-6 proR hydrogen from 5-enolpyruvylshikimate-3-phosphate (EPSP) to yield chorismate, which is the branch point compound that serves as the starting substrate for the three terminal pathways of aromatic amino acid biosynthesis. This reaction introduces a second double bond into the aromatic ring system. In Microcystis aeruginosa (strain NIES-843 / IAM M-2473), this protein is Chorismate synthase.